Reading from the N-terminus, the 364-residue chain is DNA polymerase IV (364 aa).

The UmuC domain maps to 14–198; it reads IIHIDMDAFF…LPIEKFHGVG (185 aa). Mg(2+) is bound by residues D18 and D116. The active site involves E117.

Belongs to the DNA polymerase type-Y family. Monomer. Mg(2+) is required as a cofactor.

It localises to the cytoplasm. It catalyses the reaction DNA(n) + a 2'-deoxyribonucleoside 5'-triphosphate = DNA(n+1) + diphosphate. In terms of biological role, poorly processive, error-prone DNA polymerase involved in untargeted mutagenesis. Copies undamaged DNA at stalled replication forks, which arise in vivo from mismatched or misaligned primer ends. These misaligned primers can be extended by PolIV. Exhibits no 3'-5' exonuclease (proofreading) activity. May be involved in translesional synthesis, in conjunction with the beta clamp from PolIII. In Streptococcus pyogenes serotype M28 (strain MGAS6180), this protein is DNA polymerase IV.